The primary structure comprises 311 residues: Cadmium, cobalt and zinc/H(+)-K(+) antiporter (311 aa).

The Extracellular portion of the chain corresponds to Met1 to Lys12. A helical transmembrane segment spans residues Val13 to Phe33. The Cytoplasmic segment spans residues Leu34–Asp43. A helical transmembrane segment spans residues Ala44 to Ala64. The Extracellular portion of the chain corresponds to Glu65–Arg78. The chain crosses the membrane as a helical span at residues Phe79 to Ile99. Residues Tyr100 to Thr115 lie on the Cytoplasmic side of the membrane. The helical transmembrane segment at Gly116–Met136 threads the bilayer. The Extracellular portion of the chain corresponds to Ser137–Asp157. Residues Met158–Trp178 form a helical membrane-spanning segment. Over Ala179–His311 the chain is Cytoplasmic.

It belongs to the cation diffusion facilitator (CDF) transporter (TC 2.A.4) family. SLC30A subfamily.

The protein localises to the cell membrane. Involved in divalent cation and potassium homeostasis in the cell. Catalyzes the active efflux of zinc, cadmium and cobalt, in exchange for potassium and H(+) ions. This Bacillus subtilis (strain 168) protein is Cadmium, cobalt and zinc/H(+)-K(+) antiporter (czcD).